The sequence spans 187 residues: Ribosome hibernation promotion factor (187 aa).

The protein belongs to the HPF/YfiA ribosome-associated protein family. Long HPF subfamily. In terms of assembly, interacts with 100S ribosomes.

It is found in the cytoplasm. Functionally, involved in 100S ribosome formation from 70S ribosomes; 100S ribosomes are probably translationally inactive. Ribosome hibernation may be used by the cell to decrease overall energy consumption under nutrient-limiting conditions. Unlike E.coli, 100S ribosomes are present from mid-exponential growth, peak during the transition from log to stationary phase and then decrease. The protein is Ribosome hibernation promotion factor of Listeria monocytogenes serotype 1/2a (strain 10403S).